The primary structure comprises 98 residues: DNA-binding protein Fis (98 aa).

A DNA-binding region (H-T-H motif) is located at residues 74-93; sequence QTRAALMMGINRGTLRKKLK.

It belongs to the transcriptional regulatory Fis family. As to quaternary structure, homodimer.

Functionally, activates ribosomal RNA transcription. Plays a direct role in upstream activation of rRNA promoters. The polypeptide is DNA-binding protein Fis (Citrobacter koseri (strain ATCC BAA-895 / CDC 4225-83 / SGSC4696)).